We begin with the raw amino-acid sequence, 256 residues long: Homeobox protein TGIF2LX (256 aa).

The segment at 1 to 45 (MEAAADSPAETRSRVEKDSRRVEKDSRRPKKDSPAKTQSPAQDTS) is disordered. The segment covering 9–34 (AETRSRVEKDSRRVEKDSRRPKKDSP) has biased composition (basic and acidic residues). The span at 35–45 (AKTQSPAQDTS) shows a compositional bias: polar residues. A DNA-binding region (homeobox; TALE-type) is located at residues 62–125 (EHKKKRKGYL…INARRRILPD (64 aa)). Positions 136 to 224 (VGHKTGKDAN…SSSPEPVSTE (89 aa)) are disordered. Residues 166–179 (DNVQSLPLRSSPKG) are compositionally biased toward polar residues. Positions 209-224 (VSNITSSSSPEPVSTE) are enriched in low complexity.

Belongs to the TALE/TGIF homeobox family.

The protein resides in the nucleus. May have a transcription role in testis. The chain is Homeobox protein TGIF2LX (TGIF2LX) from Papio hamadryas (Hamadryas baboon).